We begin with the raw amino-acid sequence, 182 residues long: UPF0397 protein BCE_2667 (182 aa).

Helical transmembrane passes span 9 to 29, 40 to 60, 71 to 91, 114 to 134, and 142 to 162; these read VVAI…GFSI, AILT…IGLI, WGIW…MGLI, ITGL…DIIV, and IVIQ…VLGL.

It belongs to the UPF0397 family.

It is found in the cell membrane. The sequence is that of UPF0397 protein BCE_2667 from Bacillus cereus (strain ATCC 10987 / NRS 248).